A 190-amino-acid chain; its full sequence is NADH-quinone oxidoreductase subunit B (190 aa).

[4Fe-4S] cluster-binding residues include Cys69, Cys70, Cys134, and Cys164.

This sequence belongs to the complex I 20 kDa subunit family. NDH-1 is composed of 14 different subunits. Subunits NuoB, C, D, E, F, and G constitute the peripheral sector of the complex. The cofactor is [4Fe-4S] cluster.

The protein localises to the cell inner membrane. The enzyme catalyses a quinone + NADH + 5 H(+)(in) = a quinol + NAD(+) + 4 H(+)(out). NDH-1 shuttles electrons from NADH, via FMN and iron-sulfur (Fe-S) centers, to quinones in the respiratory chain. Couples the redox reaction to proton translocation (for every two electrons transferred, four hydrogen ions are translocated across the cytoplasmic membrane), and thus conserves the redox energy in a proton gradient. The sequence is that of NADH-quinone oxidoreductase subunit B from Chelativorans sp. (strain BNC1).